Reading from the N-terminus, the 208-residue chain is MFDIGVGELTLIAVVALVVLGPERLPKAARFAGLWVRRARMQWDSVKQELERELEAEELKRSLQDVQASLREAEDQLRNKQQQVEQGARALHDDVSRDIDIRASATPVATPLELAHADWSASPDVDTAAGATDAAGAAHTAPVIAQAQPIAPAPHQTLVPAPHDAIVPAPHAAHLASAPEPVAVVPVDAGTPAASMPSAPAKIQEKQP.

Residues 1 to 21 (MFDIGVGELTLIAVVALVVLG) traverse the membrane as a helical segment. A disordered region spans residues 188 to 208 (DAGTPAASMPSAPAKIQEKQP).

The protein belongs to the TatB family. The Tat system comprises two distinct complexes: a TatABC complex, containing multiple copies of TatA, TatB and TatC subunits, and a separate TatA complex, containing only TatA subunits. Substrates initially bind to the TatABC complex, which probably triggers association of the separate TatA complex to form the active translocon.

It is found in the cell inner membrane. Part of the twin-arginine translocation (Tat) system that transports large folded proteins containing a characteristic twin-arginine motif in their signal peptide across membranes. Together with TatC, TatB is part of a receptor directly interacting with Tat signal peptides. TatB may form an oligomeric binding site that transiently accommodates folded Tat precursor proteins before their translocation. This chain is Sec-independent protein translocase protein TatB, found in Xanthomonas axonopodis pv. citri (strain 306).